A 355-amino-acid polypeptide reads, in one-letter code: Beta-1,2-mannobiose phosphorylase (355 aa).

Beta-D-Manp-(1-&gt;2)-beta-D-Manp-(1-&gt;2)-D-Manp is bound by residues Asn31, Arg46, Arg89, 140–141 (ED), Lys188, Tyr273, and Asp333.

The protein belongs to the glycosyl hydrolase 130 family. In terms of assembly, homodimer.

The enzyme catalyses beta-D-mannopyranosyl-(1-&gt;2)-D-mannopyranose + phosphate = alpha-D-mannose 1-phosphate + D-mannose. Catalyzes the reversible phosphorolysis of 1,2-beta-oligomannan. In phosphorolytic reactions, prefers beta-1,2-mannobiose (beta-1,2-Man2) as substrate, but can also use beta-1,2-mannotriose. The chain is Beta-1,2-mannobiose phosphorylase from Listeria innocua serovar 6a (strain ATCC BAA-680 / CLIP 11262).